Here is a 412-residue protein sequence, read N- to C-terminus: Multifunctional CCA protein (412 aa).

Positions 8 and 11 each coordinate ATP. CTP contacts are provided by Gly-8 and Arg-11. 2 residues coordinate Mg(2+): Glu-21 and Asp-23. Arg-91, Arg-137, and Arg-140 together coordinate ATP. CTP is bound by residues Arg-91, Arg-137, and Arg-140. Positions Thr-228–Trp-329 constitute an HD domain.

This sequence belongs to the tRNA nucleotidyltransferase/poly(A) polymerase family. Bacterial CCA-adding enzyme type 1 subfamily. As to quaternary structure, monomer. Can also form homodimers and oligomers. Requires Mg(2+) as cofactor. Ni(2+) is required as a cofactor.

The enzyme catalyses a tRNA precursor + 2 CTP + ATP = a tRNA with a 3' CCA end + 3 diphosphate. The catalysed reaction is a tRNA with a 3' CCA end + 2 CTP + ATP = a tRNA with a 3' CCACCA end + 3 diphosphate. In terms of biological role, catalyzes the addition and repair of the essential 3'-terminal CCA sequence in tRNAs without using a nucleic acid template. Adds these three nucleotides in the order of C, C, and A to the tRNA nucleotide-73, using CTP and ATP as substrates and producing inorganic pyrophosphate. tRNA 3'-terminal CCA addition is required both for tRNA processing and repair. Also involved in tRNA surveillance by mediating tandem CCA addition to generate a CCACCA at the 3' terminus of unstable tRNAs. While stable tRNAs receive only 3'-terminal CCA, unstable tRNAs are marked with CCACCA and rapidly degraded. This is Multifunctional CCA protein from Yersinia pseudotuberculosis serotype I (strain IP32953).